Here is a 411-residue protein sequence, read N- to C-terminus: Na(+)-translocating NADH-quinone reductase subunit B (411 aa).

3 consecutive transmembrane segments (helical) span residues 56–76 (MMIT…YNVG), 120–140 (ALGA…CTIW), and 166–186 (IVPP…GIIV). Threonine 233 carries the post-translational modification FMN phosphoryl threonine. A run of 5 helical transmembrane segments spans residues 272-292 (VSTL…IAAW), 294-314 (IIAG…LIGS), 319-339 (MFSM…GMVF), 348-368 (SFTN…AVLI), and 378-398 (GMML…YIVV).

It belongs to the NqrB/RnfD family. Composed of six subunits; NqrA, NqrB, NqrC, NqrD, NqrE and NqrF. It depends on FMN as a cofactor.

Its subcellular location is the cell inner membrane. It carries out the reaction a ubiquinone + n Na(+)(in) + NADH + H(+) = a ubiquinol + n Na(+)(out) + NAD(+). In terms of biological role, NQR complex catalyzes the reduction of ubiquinone-1 to ubiquinol by two successive reactions, coupled with the transport of Na(+) ions from the cytoplasm to the periplasm. NqrA to NqrE are probably involved in the second step, the conversion of ubisemiquinone to ubiquinol. The sequence is that of Na(+)-translocating NADH-quinone reductase subunit B from Haemophilus influenzae (strain 86-028NP).